We begin with the raw amino-acid sequence, 323 residues long: Acetyl esterase (323 aa).

Positions 91 to 93 match the Involved in the stabilization of the negatively charged intermediate by the formation of the oxyanion hole motif; that stretch reads HGG. Catalysis depends on residues Ser-165, Asp-262, and His-292.

It belongs to the 'GDXG' lipolytic enzyme family. In terms of assembly, homodimer. Interacts with MalT and MelA.

It localises to the cytoplasm. In terms of biological role, displays esterase activity towards short chain fatty esters (acyl chain length of up to 8 carbons). Able to hydrolyze triacetylglycerol (triacetin) and tributyrylglycerol (tributyrin), but not trioleylglycerol (triolein) or cholesterol oleate. Negatively regulates MalT activity by antagonizing maltotriose binding. Inhibits MelA galactosidase activity. The sequence is that of Acetyl esterase from Salmonella paratyphi B (strain ATCC BAA-1250 / SPB7).